Here is a 369-residue protein sequence, read N- to C-terminus: MKPMSYWDYIKVEELLALQGGANGDETQVGNDEALFIVVHQVYELWFKLILRELTFARDLLRQDTVPGHQIALGVRSLRRAIAVFEQANQHFRVMETMTARDFLDFRERLMPASGFQSAQLREIEILLGLEDNERIAVCQGGSFKDALKLPNGALSSAAYRVEAREAHGQSLKHCLYAWLSRIPIDGSNEPAAVKRFLRDYIGSVRAESQRRLQTAIDRQLAPAEVERLRARYQADDVGAETFLLAEEDPQADAMTREKRRAVRAAMLFVESYRELPQLAWPRELLESILELEQSMLIWRQRHARMVERIIGRRVGTGGSSGVDYLDQTALRYRVFTDLWTVRSLLLRKSSVPPIRQGASYAFAEEALV.

Substrate is bound by residues phenylalanine 36 to histidine 40 and arginine 107. Histidine 303 is a binding site for heme. Threonine 317 is a binding site for substrate.

It belongs to the tryptophan 2,3-dioxygenase family. In terms of assembly, homotetramer. Requires heme as cofactor.

It carries out the reaction L-tryptophan + O2 = N-formyl-L-kynurenine. It functions in the pathway amino-acid degradation; L-tryptophan degradation via kynurenine pathway; L-kynurenine from L-tryptophan: step 1/2. Its function is as follows. Heme-dependent dioxygenase that catalyzes the oxidative cleavage of the L-tryptophan (L-Trp) pyrrole ring and converts L-tryptophan to N-formyl-L-kynurenine. Catalyzes the oxidative cleavage of the indole moiety. This chain is Tryptophan 2,3-dioxygenase 2, found in Ralstonia nicotianae (strain ATCC BAA-1114 / GMI1000) (Ralstonia solanacearum).